An 844-amino-acid chain; its full sequence is MADSDDEHDRRRRDKFRRERSDYDRSREREERRRDDWSDREWDRGRERRSRGEYRDYESRSRRDRFSPQRHDISPPQKRMRRDWDDHGSDPYHSGYEMPYSSSAGPAYGPPQPWGHPEMHVMQHHGIPIQARLGNLHDVDLGTPAPTMKTFKEFLLSLEDSVDETEAVKRYNDYKIDFRRQQMQEFFLAHKDEEWFRSKYHPDEVGKHKQESRASLHNRLNAFMFLMENSWLNEVQLDIAQSTAIIKVLDAAVIKMEGGTEIDLKILDEEEEEAKREAAKKEEARVTETEKVITEEKEAPAKPEKDKEPESEEKPVKPEEEEEKKVEKEEPERETRKPGTRKRKRSGDSDDGSDSESDTETASPKPETPNQNGCEDTPKKEEETEKPKEKPKEDTVKPRPLHKTCSIFMRNIPPNISKAEITALCKRYPGFMRVALSEPQPERRFLRKAYVTFDRSVNIKEICWSVQNIRLRECELSPGVNRDLTYRVRNINGITLHRPIVRNDIKLAARLIHALDERAQLWEGEQGDQVVSAQNPILKNITDYLIDEVNAEEEELLSSAGRTPETEAPKEGNPTEITVERDEKLIKVLDKLLFYLRIVHSVDYYNTCEYPNEDEMPTRCGMMHVRGPLPPNRVSHGEVTEWQKTIEEKLAPLFAVRETLSEDEAMKMGKKDPEQEAEKFVTANTQELGKEKWLCPLSGKKFKGPEFVRKHIFNKHAEKIEEVKKEVEFFNNYLTDSKRPALPEVKPLQPPGGAAGQALAAGLLYPPQGPQALLPYGQPRPPVLGYGGAPQFPPNPYGAGRGNYDSFRGQGMYPGKPRNRMMRGDPRSIIEYRDLDAPDDVDFF.

Disordered regions lie at residues 1–90 (MADS…HGSD), 277–401 (EAAK…PRPL), 555–575 (ELLS…GNPT), and 794–825 (PNPY…MRGD). 2 stretches are compositionally biased toward basic and acidic residues: residues 16 to 73 (FRRE…RHDI) and 277 to 337 (EAAK…ETRK). Acidic residues predominate over residues 349–359 (SDDGSDSESDT). Over residues 376 to 397 (DTPKKEEETEKPKEKPKEDTVK) the composition is skewed to basic and acidic residues.

The protein belongs to the ARS2 family. In terms of assembly, interacts ncbp1/cbp80.

It is found in the nucleus. The protein localises to the nucleoplasm. It localises to the cytoplasm. Its function is as follows. Acts as a mediator between the cap-binding complex (CBC) and the primary microRNAs (miRNAs) processing machinery during cell proliferation. Contributes to the stability and delivery of capped primary miRNA transcripts to the primary miRNA processing complex, thereby playing a role in RNA-mediated gene silencing (RNAi) by miRNAs. In Xenopus laevis (African clawed frog), this protein is Serrate RNA effector molecule homolog B (srrt-b).